The primary structure comprises 135 residues: Large ribosomal subunit protein mL61 (135 aa).

A compositionally biased stretch (basic and acidic residues) spans 114–129 (HHESSPENIKEAHKQD). Positions 114 to 135 (HHESSPENIKEAHKQDYSPPSN) are disordered.

This sequence belongs to the mitochondrion-specific ribosomal protein mL61 family. Component of the mitochondrial large ribosomal subunit (mt-LSU). Mature yeast 74S mitochondrial ribosomes consist of a small (37S) and a large (54S) subunit. The 37S small subunit contains a 15S ribosomal RNA (15S mt-rRNA) and at least 32 different proteins. The 54S large subunit contains a 21S rRNA (21S mt-rRNA) and at least 45 different proteins.

The protein resides in the mitochondrion. In terms of biological role, component of the mitochondrial ribosome (mitoribosome), a dedicated translation machinery responsible for the synthesis of mitochondrial genome-encoded proteins, including at least some of the essential transmembrane subunits of the mitochondrial respiratory chain. The mitoribosomes are attached to the mitochondrial inner membrane and translation products are cotranslationally integrated into the membrane. mL61 is not essential in cells grown at 30 degrees Celsius but is required for mitochondrial translation in cells grown at 18 degrees Celsius. The protein is Large ribosomal subunit protein mL61 (mrp49) of Schizosaccharomyces pombe (strain 972 / ATCC 24843) (Fission yeast).